An 84-amino-acid polypeptide reads, in one-letter code: Seminal ribonuclease (84 aa).

Disulfide bonds link C10/C65, C28/C80, and C35/C42. Residues 11–15 (KPVNT), K36, and R55 contribute to the substrate site.

It belongs to the pancreatic ribonuclease family. In terms of assembly, homodimer; disulfide-linked.

The protein localises to the secreted. It catalyses the reaction an [RNA] containing cytidine + H2O = an [RNA]-3'-cytidine-3'-phosphate + a 5'-hydroxy-ribonucleotide-3'-[RNA].. The enzyme catalyses an [RNA] containing uridine + H2O = an [RNA]-3'-uridine-3'-phosphate + a 5'-hydroxy-ribonucleotide-3'-[RNA].. This is Seminal ribonuclease (SRN) from Giraffa camelopardalis (Giraffe).